The primary structure comprises 392 residues: Meiotically up-regulated gene 11 protein (392 aa).

It is found in the cytoplasm. The protein localises to the nucleus. Functionally, has a role in meiosis. This chain is Meiotically up-regulated gene 11 protein (mug11), found in Schizosaccharomyces pombe (strain 972 / ATCC 24843) (Fission yeast).